The following is a 145-amino-acid chain: Large ribosomal subunit protein uL13 (145 aa).

It belongs to the universal ribosomal protein uL13 family. Part of the 50S ribosomal subunit.

Its function is as follows. This protein is one of the early assembly proteins of the 50S ribosomal subunit, although it is not seen to bind rRNA by itself. It is important during the early stages of 50S assembly. The sequence is that of Large ribosomal subunit protein uL13 from Bacillus mycoides (strain KBAB4) (Bacillus weihenstephanensis).